The primary structure comprises 223 residues: Uracil-DNA glycosylase (223 aa).

The Proton acceptor role is filled by aspartate 67.

This sequence belongs to the uracil-DNA glycosylase (UDG) superfamily. UNG family.

The protein resides in the cytoplasm. The catalysed reaction is Hydrolyzes single-stranded DNA or mismatched double-stranded DNA and polynucleotides, releasing free uracil.. Its function is as follows. Excises uracil residues from the DNA which can arise as a result of misincorporation of dUMP residues by DNA polymerase or due to deamination of cytosine. The polypeptide is Uracil-DNA glycosylase (Borrelia turicatae (strain 91E135)).